The primary structure comprises 206 residues: Outer-membrane lipoprotein carrier protein (206 aa).

The N-terminal stretch at 1–21 (MKKLLCAVLLSPLLYSNAVLA) is a signal peptide.

Belongs to the LolA family. Monomer.

The protein localises to the periplasm. In terms of biological role, participates in the translocation of lipoproteins from the inner membrane to the outer membrane. Only forms a complex with a lipoprotein if the residue after the N-terminal Cys is not an aspartate (The Asp acts as a targeting signal to indicate that the lipoprotein should stay in the inner membrane). The polypeptide is Outer-membrane lipoprotein carrier protein (Shewanella sp. (strain ANA-3)).